The chain runs to 322 residues: tRNA-dihydrouridine(16) synthase (322 aa).

FMN-binding positions include 7–9 (PME) and glutamine 68. Residue cysteine 98 is the Proton donor of the active site. FMN contacts are provided by residues lysine 139, 200–202 (NGE), and 224–225 (CR).

It belongs to the Dus family. DusC subfamily. The cofactor is FMN.

It catalyses the reaction 5,6-dihydrouridine(16) in tRNA + NADP(+) = uridine(16) in tRNA + NADPH + H(+). It carries out the reaction 5,6-dihydrouridine(16) in tRNA + NAD(+) = uridine(16) in tRNA + NADH + H(+). Catalyzes the synthesis of 5,6-dihydrouridine (D), a modified base found in the D-loop of most tRNAs, via the reduction of the C5-C6 double bond in target uridines. Specifically modifies U16 in tRNAs. The sequence is that of tRNA-dihydrouridine(16) synthase from Vibrio parahaemolyticus serotype O3:K6 (strain RIMD 2210633).